The chain runs to 328 residues: GTPase Obg 2 (328 aa).

Positions 1-139 (MSFRREKFIE…HCVLLKLKIV (139 aa)) constitute an Obg domain. The region spanning 140 to 309 (SDVGIIGMPN…LHAQVKKAVV (170 aa)) is the OBG-type G domain. Residues 146 to 153 (GMPNAGKS), 171 to 175 (FTTLE), 192 to 195 (DIPG), 259 to 262 (NKCD), and 290 to 292 (GDE) contribute to the GTP site. Ser-153 and Thr-173 together coordinate Mg(2+).

This sequence belongs to the TRAFAC class OBG-HflX-like GTPase superfamily. OBG GTPase family. In terms of assembly, monomer. Mg(2+) serves as cofactor.

It localises to the cytoplasm. In terms of biological role, an essential GTPase which binds GTP, GDP and possibly (p)ppGpp with moderate affinity, with high nucleotide exchange rates and a fairly low GTP hydrolysis rate. Plays a role in control of the cell cycle, stress response, ribosome biogenesis and in those bacteria that undergo differentiation, in morphogenesis control. This is GTPase Obg 2 from Anaplasma marginale (strain St. Maries).